We begin with the raw amino-acid sequence, 490 residues long: Cytochrome P450 71A19 (490 aa).

A helical transmembrane segment spans residues 3-23 (IILVTLCLTTLLALLLLKSIL). Cysteine 433 is a heme binding site.

Belongs to the cytochrome P450 family. Heme is required as a cofactor.

Its subcellular location is the membrane. This is Cytochrome P450 71A19 (CYP71A19) from Arabidopsis thaliana (Mouse-ear cress).